Reading from the N-terminus, the 536-residue chain is uncharacterized protein (536 aa).

The 232-residue stretch at 163–394 (LDAYDSMSVQ…MNFIPTRPLE (232 aa)) folds into the Radical SAM core domain. 3 residues coordinate [4Fe-4S] cluster: Cys177, Cys181, and Cys184.

It depends on [4Fe-4S] cluster as a cofactor.

This is an uncharacterized protein from Synechocystis sp. (strain ATCC 27184 / PCC 6803 / Kazusa).